The sequence spans 1032 residues: Probable ATP-dependent RNA helicase DDX46 (1032 aa).

Positions 1 to 24 are enriched in basic residues; that stretch reads MGRESRHYRKRSASRGRSGSRSRS. The segment at 1-227 is disordered; the sequence is MGRESRHYRK…TEMEDEELDP (227 aa). Residue glycine 2 is the site of N-myristoyl glycine attachment. A compositionally biased stretch (basic and acidic residues) spans 26-49; it reads SPSDKRSKRGDDRRSRSRDRDRRR. 2 stretches are compositionally biased toward basic residues: residues 50–73 and 81–103; these read ERSRSRDKRRSRSRDRKRLRRSRS and ERRRSRSRDRRRSRSRSRGRRSR. Residues 112–200 show a composition bias toward basic and acidic residues; the sequence is KKTENRSRSK…EMKQGKKWSL (89 aa). The stretch at 152–197 forms a coiled coil; sequence DQNKLEEEMRKRKERVEKWREEQRKKAMENIGELKKEIEEMKQGKK. Lysine 186 participates in a covalent cross-link: Glycyl lysine isopeptide (Lys-Gly) (interchain with G-Cter in SUMO2). At serine 199 the chain carries Phosphoserine. The span at 201–211 shows a compositional bias: acidic residues; sequence EDDDDDEDDPA. An N6-acetyllysine modification is found at lysine 263. Tyrosine 294 bears the Phosphotyrosine mark. Phosphoserine occurs at positions 295 and 296. Lysine 325 is covalently cross-linked (Glycyl lysine isopeptide (Lys-Gly) (interchain with G-Cter in SUMO2)). At serine 346 the chain carries Phosphoserine. Residues 372 to 400 carry the Q motif motif; the sequence is KSWVQCGISMKILNSLKKHGYEKPTPIQT. Residues 403-581 enclose the Helicase ATP-binding domain; the sequence is IPAIMSGRDL…RRILSKPIEV (179 aa). Residue 416 to 423 coordinates ATP; it reads AKTGSGKT. The DEAD box signature appears at 529–532; sequence DEAD. Positions 592 to 753 constitute a Helicase C-terminal domain; sequence DVEQQVIVIE…AVPPDLEKLW (162 aa). Lysine 776 carries the N6-acetyllysine modification. Residue lysine 779 forms a Glycyl lysine isopeptide (Lys-Gly) (interchain with G-Cter in SUMO2) linkage. At serine 804 the chain carries Phosphoserine. Lysine 904 carries the post-translational modification N6-acetyllysine. Glycyl lysine isopeptide (Lys-Gly) (interchain with G-Cter in SUMO2) cross-links involve residues lysine 908 and lysine 916. Position 929 is a phosphoserine (serine 929).

It belongs to the DEAD box helicase family. DDX46/PRP5 subfamily. As to quaternary structure, component of the 17S U2 SnRNP complex, a ribonucleoprotein complex that contains small nuclear RNA (snRNA) U2 and a number of specific proteins. Within the 17S U2 SnRNP complex, DDX46 is part of the SF3B subcomplex, which is required for 'A' complex assembly formed by the stable binding of U2 snRNP to the branchpoint sequence in pre-mRNA. Recruited to the 17S U2 SnRNP complex following release of DDX42; DDX42 and DDX46 bind the SF3B subcomplex in a competitive manner.

It is found in the nucleus speckle. The protein localises to the nucleus. It localises to the cajal body. The catalysed reaction is ATP + H2O = ADP + phosphate + H(+). Functionally, component of the 17S U2 SnRNP complex of the spliceosome, a large ribonucleoprotein complex that removes introns from transcribed pre-mRNAs. The 17S U2 SnRNP complex (1) directly participates in early spliceosome assembly and (2) mediates recognition of the intron branch site during pre-mRNA splicing by promoting the selection of the pre-mRNA branch-site adenosine, the nucleophile for the first step of splicing. Within the 17S U2 SnRNP complex, DDX46 plays essential roles during assembly of pre-spliceosome and proofreading of the branch site. The protein is Probable ATP-dependent RNA helicase DDX46 (Ddx46) of Mus musculus (Mouse).